We begin with the raw amino-acid sequence, 213 residues long: Pyridoxine/pyridoxamine 5'-phosphate oxidase (213 aa).

Substrate-binding positions include 8-11 (RREY) and lysine 67. Residues 62-67 (RIVLLK), 77-78 (FT), arginine 83, lysine 84, and glutamine 106 contribute to the FMN site. Tyrosine 124, arginine 128, and serine 132 together coordinate substrate. Residues 141-142 (QS) and tryptophan 186 each bind FMN. 192 to 194 (RLH) serves as a coordination point for substrate. FMN is bound at residue arginine 196.

The protein belongs to the pyridoxamine 5'-phosphate oxidase family. As to quaternary structure, homodimer. FMN is required as a cofactor.

The enzyme catalyses pyridoxamine 5'-phosphate + O2 + H2O = pyridoxal 5'-phosphate + H2O2 + NH4(+). The catalysed reaction is pyridoxine 5'-phosphate + O2 = pyridoxal 5'-phosphate + H2O2. Its pathway is cofactor metabolism; pyridoxal 5'-phosphate salvage; pyridoxal 5'-phosphate from pyridoxamine 5'-phosphate: step 1/1. The protein operates within cofactor metabolism; pyridoxal 5'-phosphate salvage; pyridoxal 5'-phosphate from pyridoxine 5'-phosphate: step 1/1. Functionally, catalyzes the oxidation of either pyridoxine 5'-phosphate (PNP) or pyridoxamine 5'-phosphate (PMP) into pyridoxal 5'-phosphate (PLP). This chain is Pyridoxine/pyridoxamine 5'-phosphate oxidase, found in Shewanella woodyi (strain ATCC 51908 / MS32).